The following is a 199-amino-acid chain: dITP/XTP pyrophosphatase (199 aa).

7 to 12 provides a ligand contact to substrate; sequence SANKGK. Mg(2+)-binding residues include aspartate 38 and aspartate 73. Residue aspartate 73 is the Proton acceptor of the active site. Substrate-binding positions include serine 74, 155–158, lysine 178, and 183–184; these read FGYD and HR.

Belongs to the HAM1 NTPase family. Homodimer. Mg(2+) serves as cofactor.

The catalysed reaction is XTP + H2O = XMP + diphosphate + H(+). It catalyses the reaction dITP + H2O = dIMP + diphosphate + H(+). It carries out the reaction ITP + H2O = IMP + diphosphate + H(+). Its function is as follows. Pyrophosphatase that catalyzes the hydrolysis of nucleoside triphosphates to their monophosphate derivatives, with a high preference for the non-canonical purine nucleotides XTP (xanthosine triphosphate), dITP (deoxyinosine triphosphate) and ITP. Seems to function as a house-cleaning enzyme that removes non-canonical purine nucleotides from the nucleotide pool, thus preventing their incorporation into DNA/RNA and avoiding chromosomal lesions. This chain is dITP/XTP pyrophosphatase, found in Aliarcobacter butzleri (strain RM4018) (Arcobacter butzleri).